The primary structure comprises 455 residues: 3-isopropylmalate dehydratase large subunit (455 aa).

Positions 336, 396, and 399 each coordinate [4Fe-4S] cluster.

The protein belongs to the aconitase/IPM isomerase family. LeuC type 1 subfamily. Heterodimer of LeuC and LeuD. It depends on [4Fe-4S] cluster as a cofactor.

It catalyses the reaction (2R,3S)-3-isopropylmalate = (2S)-2-isopropylmalate. Its pathway is amino-acid biosynthesis; L-leucine biosynthesis; L-leucine from 3-methyl-2-oxobutanoate: step 2/4. Catalyzes the isomerization between 2-isopropylmalate and 3-isopropylmalate, via the formation of 2-isopropylmaleate. The sequence is that of 3-isopropylmalate dehydratase large subunit from Staphylococcus aureus (strain MRSA252).